A 248-amino-acid chain; its full sequence is Aquaporin Z (248 aa).

Transmembrane regions (helical) follow at residues 11 to 31 (FIGT…AAAF) and 36 to 56 (IGFA…AFAI). Residues 65 to 67 (NPA) carry the NPA 1 motif. 3 consecutive transmembrane segments (helical) span residues 87–107 (IAAQ…IAGG), 132–152 (LLAC…IILG), and 161–181 (GFAP…SIPV). Residues 187–189 (NPA) carry the NPA 2 motif. Residues 203 to 223 (IAELWLFWLAPIVGAALAGLF) traverse the membrane as a helical segment.

The protein belongs to the MIP/aquaporin (TC 1.A.8) family. In terms of assembly, homotetramer.

It localises to the cell inner membrane. The catalysed reaction is H2O(in) = H2O(out). Functionally, channel that permits osmotically driven movement of water in both directions. It is involved in the osmoregulation and in the maintenance of cell turgor during volume expansion in rapidly growing cells. It mediates rapid entry or exit of water in response to abrupt changes in osmolarity. In Gloeobacter violaceus (strain ATCC 29082 / PCC 7421), this protein is Aquaporin Z.